We begin with the raw amino-acid sequence, 310 residues long: Uridine phosphorylase 1 (310 aa).

Phosphate is bound by residues Gly60, Arg94, and 138 to 141; that span reads RIGT. Uridine is bound by residues 142-143 and 217-219; these read SG and QGR.

It belongs to the PNP/UDP phosphorylase family. As to quaternary structure, homodimer.

The catalysed reaction is uridine + phosphate = alpha-D-ribose 1-phosphate + uracil. It catalyses the reaction 2'-deoxyuridine + phosphate = 2-deoxy-alpha-D-ribose 1-phosphate + uracil. The protein operates within pyrimidine metabolism; UMP biosynthesis via salvage pathway; uracil from uridine (phosphorylase route): step 1/1. Catalyzes the reversible phosphorylytic cleavage of uridine to uracil and ribose-1-phosphate which can then be utilized as carbon and energy sources or in the rescue of pyrimidine bases for nucleotide synthesis. Shows broad substrate specificity and can also accept deoxyuridine and other analogous compounds. The sequence is that of Uridine phosphorylase 1 from Homo sapiens (Human).